The following is a 131-amino-acid chain: Monothiol glutaredoxin-S6 (131 aa).

One can recognise a Glutaredoxin domain in the interval 31 to 131; it reads SAFVQNAIYS…KLLGNSQSQR (101 aa). Cysteine 51 contacts [2Fe-2S] cluster.

This sequence belongs to the glutaredoxin family. CPYC subfamily.

It localises to the cytoplasm. In terms of biological role, may only reduce GSH-thiol disulfides, but not protein disulfides. In Oryza sativa subsp. japonica (Rice), this protein is Monothiol glutaredoxin-S6 (GRXS6).